The sequence spans 244 residues: MDLTVTHITHKETYKEPRDDDDDKQVVAEIMARSFIPTLITTIPWEGFHFAGHEIQITEGKDCYGAFVWPSALVLCYFLETHAKQYNMVDKNVIEIGAGTGLVSIVASLLGARVIATDLPELLGNLQYNISRNTKMKCKHLPQVKELSWGVALDRNFPRSSNNFDYILAADVVYAHPFLEELLMTFDHLCKETTIILWAMRFRLEKENKFVDKFKELFDLEEISSFPSLNIKLYKAMKKNRRSA.

A disordered region spans residues 1-20 (MDLTVTHITHKETYKEPRDD). Basic and acidic residues predominate over residues 9-18 (THKETYKEPR). S-adenosyl-L-methionine contacts are provided by residues tryptophan 69, 97 to 99 (GAG), aspartate 118, tryptophan 149, and alanine 170.

Belongs to the methyltransferase superfamily. METTL21 family.

Protein-lysine methyltransferase. The sequence is that of Protein-lysine methyltransferase METTL21E (Mettl21e) from Mus musculus (Mouse).